We begin with the raw amino-acid sequence, 404 residues long: Intracellular hyaluronan-binding protein 4.L (404 aa).

3 disordered regions span residues Met1–Asn21, Leu51–Ser288, and Leu359–Ala379. Residues Glu8–Gln19 show a composition bias toward polar residues. Composition is skewed to basic and acidic residues over residues Gly71–Ala81, Lys145–Arg159, and Arg165–Met184. Residues Gly188–Gly200 are compositionally biased toward gly residues. Composition is skewed to basic and acidic residues over residues Thr205 to Gly233 and Glu270 to Glu281.

The protein belongs to the SERBP1-HABP4 family. As to quaternary structure, associates with ribosomes; promoting ribosome stabilization. Interacts with eef2/eEF2; promoting ribosome stabilization.

It localises to the nucleus. The protein localises to the cytoplasm. Its subcellular location is the stress granule. The protein resides in the nucleolus. It is found in the nucleus speckle. It localises to the cajal body. In terms of biological role, ribosome-binding protein that promotes ribosome hibernation, a process during which ribosomes are stabilized in an inactive state and preserved from proteasomal degradation. Acts via its association with eef2/eEF2 factor at the A-site of the ribosome, promoting ribosome stabilization in an inactive state compatible with storage. Plays a key role in ribosome hibernation in the mature egg by promoting ribosome stabilization. Ribosomes, which are produced in large quantities during oogenesis, are stored and translationally repressed in the egg and early embryo. This Xenopus laevis (African clawed frog) protein is Intracellular hyaluronan-binding protein 4.L.